A 424-amino-acid chain; its full sequence is UDP-sugar transporter protein SLC35A5 (424 aa).

Over 1–8 (MEKQCCSH) the chain is Cytoplasmic. The chain crosses the membrane as a helical span at residues 9–29 (PVICSLSTMYTFLLGAIFIAL). The Lumenal portion of the chain corresponds to 30-53 (SSSRILLVKYSANEENKYDYLPTT). The helical transmembrane segment at 54–74 (VNVCSELVKLVFCVLVSFCVI) threads the bilayer. At 75 to 93 (KKDHQSRNLKYASWKEFSD) the chain is on the cytoplasmic side. Residues 94–116 (FMKWSIPAFLYFLDNLIVFYVLS) traverse the membrane as a helical segment. Topologically, residues 117-119 (YLQ) are lumenal. The chain crosses the membrane as a helical span at residues 120 to 142 (PAMAVIFSNFSIITTALLFRIVL). The Cytoplasmic segment spans residues 143–147 (KRRLN). The chain crosses the membrane as a helical span at residues 148–168 (WIQWASLLTLFLSIVALTAGT). Over 169–228 (KTLQHNLAGRGFHHDAFFSPSNSCLLFRSECPRKDNCTAKEWTFPEAKWNTTARVFSHIR) the chain is Lumenal. N204 is a glycosylation site (N-linked (GlcNAc...) asparagine). The helical transmembrane segment at 229-249 (LGMGHVLIIVQCFISSMANIY) threads the bilayer. The Cytoplasmic portion of the chain corresponds to 250 to 263 (NEKILKEGNQLTES). The helical transmembrane segment at 264-284 (IFIQNSKLYFFGILFNGLTLG) threads the bilayer. Over 285–303 (LQRSNRDQIKNCGFFYGHS) the chain is Lumenal. Residues 304-324 (AFSVALIFVTAFQGLSVAFIL) traverse the membrane as a helical segment. Topologically, residues 325 to 330 (KFLDNM) are cytoplasmic. Residues 331–351 (FHVLMAQVTTVIITTVSVLVF) traverse the membrane as a helical segment. Residues 352-354 (DFR) are Lumenal-facing. Residues 355 to 375 (PSLEFFLEAPSVLLSIFIYNA) traverse the membrane as a helical segment. At 376-424 (SKPQVPEYAPRQERIRDLSGNLWERSSGDGEELERLTKPKSDESDEDTF) the chain is on the cytoplasmic side. Residues S394, S416, and S419 each carry the phosphoserine modification. The interval 397 to 424 (LWERSSGDGEELERLTKPKSDESDEDTF) is disordered. The segment covering 408–417 (LERLTKPKSD) has biased composition (basic and acidic residues).

Belongs to the nucleotide-sugar transporter family. SLC35A subfamily. As to quaternary structure, probably forms homooligomers and heterooligomers with SLC35A1, SLC35A2, SLC35A3 and SLC35A4.

Its subcellular location is the golgi apparatus membrane. It catalyses the reaction UMP(out) + UDP-alpha-D-glucuronate(in) = UMP(in) + UDP-alpha-D-glucuronate(out). It carries out the reaction UMP(out) + UDP-N-acetyl-alpha-D-glucosamine(in) = UMP(in) + UDP-N-acetyl-alpha-D-glucosamine(out). The catalysed reaction is UDP-N-acetyl-alpha-D-galactosamine(in) + UMP(out) = UDP-N-acetyl-alpha-D-galactosamine(out) + UMP(in). Its function is as follows. Probable UDP-sugar:UMP transmembrane antiporter involved in UDP-alpha-D-glucuronate/UDP-GlcA, UDP-GlcNAc/UDP-N-acetyl-alpha-D-glucosamine and UDP-N-acetyl-alpha-D-galactosamine/UDP-GalNAc transport from the cytosol to the lumen of the Golgi. In Homo sapiens (Human), this protein is UDP-sugar transporter protein SLC35A5.